The following is a 25-amino-acid chain: Chrysophsin-1 (25 aa).

His-25 bears the Histidine amide mark.

Gill. Localized in certain epithelial cells lining the surface of secondary lamellae and eosinophilic granule cell-like cells at the base of secondary lamellae.

The protein resides in the secreted. Has antibacterial activity against Gram-positive bacteria B.subtilis ATCC 6633, L.garvieae ATCC 49156 and S.iniae F-8502, and Gram-negative bacteria E.coli WT-2, V.anguillarum ATCC 19264, V.penaeicida KHA, V.harveyi ATCC 14126, V.vulnificus ATCC 33148, A.salmonicida NCMB 1102 and P.putida ATCC 12633. Has hemolytic activity against human red blood cells. Seems to disrupt the membranes by adopting an alpha helical conformation. May play a significant role in innate host defense. This Pagrus major (Red sea bream) protein is Chrysophsin-1.